A 381-amino-acid polypeptide reads, in one-letter code: Alkanesulfonate monooxygenase (381 aa).

This sequence belongs to the SsuD family. As to quaternary structure, homotetramer.

It catalyses the reaction an alkanesulfonate + FMNH2 + O2 = an aldehyde + FMN + sulfite + H2O + 2 H(+). In terms of biological role, catalyzes the desulfonation of aliphatic sulfonates. The sequence is that of Alkanesulfonate monooxygenase from Escherichia coli O6:H1 (strain CFT073 / ATCC 700928 / UPEC).